Consider the following 162-residue polypeptide: Putative ripening-related protein 7 (162 aa).

Positions 1-30 (MAAAAASTKIVAVVVAVLLAILEMPSCAVA) are cleaved as a signal peptide.

The protein belongs to the kiwellin family.

The protein resides in the secreted. The polypeptide is Putative ripening-related protein 7 (Oryza sativa subsp. japonica (Rice)).